A 159-amino-acid chain; its full sequence is Urease accessory protein UreE (159 aa).

The protein belongs to the UreE family.

Its subcellular location is the cytoplasm. Involved in urease metallocenter assembly. Binds nickel. Probably functions as a nickel donor during metallocenter assembly. This chain is Urease accessory protein UreE, found in Vibrio parahaemolyticus.